The chain runs to 137 residues: NTF2-related export protein (137 aa).

One can recognise an NTF2 domain in the interval 19–135 (ESKKFMDVYY…YKVKSDRFRY (117 aa)).

Preferentially binds Ran-GTP.

It localises to the nucleus. Its function is as follows. Stimulator of protein export for NES-containing proteins. Also plays a role in the nuclear export of U1 snRNA, tRNA, and mRNA. This is NTF2-related export protein (nxt-1) from Caenorhabditis elegans.